A 318-amino-acid chain; its full sequence is Epithelial-stromal interaction protein 1 (318 aa).

Residues 1–60 (MNTRNRVVNSGLGASPASRPTRDPQDPSGRQGELSPVEDQREGLEAAPKGPSRESVVHAG) form a disordered region. Coiled coils occupy residues 73 to 188 (NINR…HQQY) and 240 to 280 (LKAE…HQTE).

In terms of tissue distribution, highly expressed in placenta, small intestine, spleen, kidney, thymus, liver, salivary gland and testes. Weakly expressed in breast, skeletal muscle and colon. Highly expressed in breast cancer upon interaction between tumor cells and stromal cells in vitro. Expressed in blood mononuclear cells from patients with systemic lupus erythematosus (SLE).

Its function is as follows. Plays a role in M1 macrophage polarization and is required for the proper regulation of gene expression during M1 versus M2 macrophage differentiation. Might play a role in RELA/p65 and STAT1 phosphorylation and nuclear localization upon activation of macrophages. The chain is Epithelial-stromal interaction protein 1 (EPSTI1) from Homo sapiens (Human).